Reading from the N-terminus, the 286-residue chain is ATP synthase gamma chain (286 aa).

The protein belongs to the ATPase gamma chain family. In terms of assembly, F-type ATPases have 2 components, CF(1) - the catalytic core - and CF(0) - the membrane proton channel. CF(1) has five subunits: alpha(3), beta(3), gamma(1), delta(1), epsilon(1). CF(0) has three main subunits: a, b and c.

It is found in the cell inner membrane. In terms of biological role, produces ATP from ADP in the presence of a proton gradient across the membrane. The gamma chain is believed to be important in regulating ATPase activity and the flow of protons through the CF(0) complex. The polypeptide is ATP synthase gamma chain (Shewanella loihica (strain ATCC BAA-1088 / PV-4)).